A 919-amino-acid polypeptide reads, in one-letter code: TRPM8 channel-associated factor 2 (919 aa).

One can recognise a Peptidase M60 domain in the interval 543–842; it reads DVWMSTGLYL…TYLQLQEVFG (300 aa).

It belongs to the TCAF family. In terms of assembly, interacts with TRPM8 (via N-terminus and C-terminus domains); the interaction inhibits TRPM8 channel activity. Interacts with TRPV6.

The protein localises to the cell membrane. Negatively regulates the plasma membrane cation channel TRPM8 activity. Involved in the recruitment of TRPM8 to the cell surface. Promotes prostate cancer cell migration stimulation in a TRPM8-dependent manner. This is TRPM8 channel-associated factor 2 from Mus musculus (Mouse).